An 847-amino-acid chain; its full sequence is MDIRNEFLQFFQNKGHAVYPSMPLVPNDATLLFTNAGMVQFKDIFTGIVPRPSIPRAASSQLCMRAGGKHNDLENVGYTARHHTLFEMLGNFSFGDYFKEEAILFAWEFVTKNLGFKPKDLYISVHEKDDEAVKLWEKFVPVDRIKKMGDKDNFWQMGDSGPCGPCSEIYIDQGEKHFKGSEDYFGGEGDRFLEIWNLVFMQYERSNDGVLSPLPKPSIDTGMGLERVQALLEHKLNNFDSSLFAPLMEEISELTSLDYASEFQPSFRVVADHARAVAFLLAQGVHFNKEGRGYVLRRILRRALRHGYLMGLKEAFLYKVVGVVCEQFANTHAYLKESKEMVVKECFEEEEHFLETLESGMELFNLSLKHLNENKIFDGKIAFKLYDTFGFPLDLTNDMLRSHGACADMQGFELCMQEQVKRSKASWKGKQNNADFSAILNAYAPNVFVGYETTECSAKVLGFFDSDFKEITDANPNQEVWVLLEKTPFYAEGGGAIGDRGALFKDNGEVAIVLDTKNFFGLNFSLLEIKKALKKGDQVIAQVSDERFEIAKHHSATHLLQSALREVLGSHVSQAGSLVESKRLRFDFSHAKALNDEELEKVEDLVNAQIFKHLNSQVEHMPLNQAKDKGALALFSEKYAENVRVVSFKEASIELCGGIHVENTGLIGGFRIVKESGVSSGVRRIEAVCGKAFYQLAKEENKELKNAKTLLKNNDVIAGINKLKESVKNSQKAPVSMDLPVEKIHGVNLVVGVVEQGDIKEMIDRLKSKHERLLAMVFKKENERITLACGVKNAPIKANVWANEVAQILGGKGGGRGDFASAGGKDIENLQAALNLAKNTALKALEG.

The Zn(2+) site is built by histidine 554, histidine 558, cysteine 656, and histidine 660.

The protein belongs to the class-II aminoacyl-tRNA synthetase family. The cofactor is Zn(2+).

The protein resides in the cytoplasm. It catalyses the reaction tRNA(Ala) + L-alanine + ATP = L-alanyl-tRNA(Ala) + AMP + diphosphate. Catalyzes the attachment of alanine to tRNA(Ala) in a two-step reaction: alanine is first activated by ATP to form Ala-AMP and then transferred to the acceptor end of tRNA(Ala). Also edits incorrectly charged Ser-tRNA(Ala) and Gly-tRNA(Ala) via its editing domain. In Helicobacter pylori (strain ATCC 700392 / 26695) (Campylobacter pylori), this protein is Alanine--tRNA ligase.